Consider the following 126-residue polypeptide: Protein ApaG (126 aa).

Residues 2 to 126 (TELETSIKID…FRLSIPGLLH (125 aa)) form the ApaG domain.

The chain is Protein ApaG from Shewanella woodyi (strain ATCC 51908 / MS32).